The sequence spans 203 residues: Small ribosomal subunit protein uS4c (203 aa).

The interval 19-43 is disordered; sequence PGLTNKSPKAGSDLRKQPRSRKKSQ. An S4 RNA-binding domain is found at 89 to 152; the sequence is MRLDNILFRL…KSRTLIQNSL (64 aa).

Belongs to the universal ribosomal protein uS4 family. In terms of assembly, part of the 30S ribosomal subunit. Contacts protein S5. The interaction surface between S4 and S5 is involved in control of translational fidelity.

The protein localises to the plastid. Its subcellular location is the chloroplast. In terms of biological role, one of the primary rRNA binding proteins, it binds directly to 16S rRNA where it nucleates assembly of the body of the 30S subunit. With S5 and S12 plays an important role in translational accuracy. This chain is Small ribosomal subunit protein uS4c (rps4), found in Jasminum nudiflorum (Winter jasmine).